Here is a 717-residue protein sequence, read N- to C-terminus: DNA polymerase iota (717 aa).

The tract at residues 1–22 (MEPLHAGAAGSSRAVCSQGPPT) is disordered. Residues 30-243 (IVHVDLDCFY…NHIKEIPGIG (214 aa)) form the UmuC domain. Residues aspartate 34 and leucine 35 each coordinate Mg(2+). A 2'-deoxyribonucleoside 5'-triphosphate-binding residues include tyrosine 39 and arginine 71. Aspartate 126 contributes to the Mg(2+) binding site. Glutamate 127 acts as the Proton acceptor in catalysis. 2 DNA-binding regions span residues 300 to 307 (QSFSEEDT) and 343 to 360 (RLVI…ESRQ). Residues 500–517 (VDQEVFKQLPADIQEEIL) carry the Ubiquitin-binding 1 (UBM1) motif. 3 disordered regions span residues 549–589 (QMQA…SHPS), 603–622 (KDEQ…FSST), and 644–687 (HRTV…DIDP). The segment covering 575–589 (PGTSGLSPGSTSHPS) has biased composition (low complexity). 2 stretches are compositionally biased toward polar residues: residues 607-622 (TSQG…FSST) and 652-662 (QTATASHQGLE). A compositionally biased stretch (basic and acidic residues) spans 665 to 679 (QGLESRELDSAEEKL). Positions 685 to 702 (IDPQVFYELPEEVQKELM) match the Ubiquitin-binding 2 (UBM2) motif.

The protein belongs to the DNA polymerase type-Y family. In terms of assembly, interacts with POLH. Interacts with REV1. Interacts with ubiquitin. Mg(2+) serves as cofactor. It depends on Mn(2+) as a cofactor. In terms of processing, monoubiquitinated. Protein monoubiquitination prevents POLI binding to ubiquitin via the ubiquitin-binding motif 1 and ubiquitin-binding motif 2. Detected in testis, and at very low levels in spleen, lung and brain. Detected in round spermatids, but not in prophase spermatocytes.

It is found in the nucleus. The catalysed reaction is DNA(n) + a 2'-deoxyribonucleoside 5'-triphosphate = DNA(n+1) + diphosphate. Its function is as follows. Error-prone DNA polymerase specifically involved in DNA repair. Plays an important role in translesion synthesis, where the normal high-fidelity DNA polymerases cannot proceed and DNA synthesis stalls. Favors Hoogsteen base-pairing in the active site. Inserts the correct base with high-fidelity opposite an adenosine template. Exhibits low fidelity and efficiency opposite a thymidine template, where it will preferentially insert guanosine. May play a role in hypermutation of immunoglobulin genes. Forms a Schiff base with 5'-deoxyribose phosphate at abasic sites, but may not have lyase activity. This chain is DNA polymerase iota (Poli), found in Mus musculus (Mouse).